Here is a 267-residue protein sequence, read N- to C-terminus: MAEPLTVSPELTANYAYFFDLDGTLAEIKPHPDQVVVPHKILQLLDRLAAHNAGALALISGRSMTELDALAKPFRFPLAGVHGAERRDINGKTHIVRLPEAVVREVEALLRSTLVALPGTELESKGMAFALHYRQAPEHEAALLALAQHVTQHWPQLALQPGKCVVEIKPKGTNKGEAIAAFMQEAPFAGRIPVFVGDDLTDEAGFGVVNHAGGISVKVGVGATQAAWRLESVPDVWRWLEQINYPQQEQQVMNNRRDGYESFSRSI.

The Nucleophile role is filled by Asp-20. 3 residues coordinate Mg(2+): Asp-20, Asp-22, and Asp-198. 20–22 is a binding site for substrate; the sequence is DLD.

This sequence belongs to the trehalose phosphatase family. It depends on Mg(2+) as a cofactor.

It catalyses the reaction alpha,alpha-trehalose 6-phosphate + H2O = alpha,alpha-trehalose + phosphate. Its pathway is glycan biosynthesis; trehalose biosynthesis. In terms of biological role, removes the phosphate from trehalose 6-phosphate to produce free trehalose. The sequence is that of Trehalose-phosphate phosphatase (otsB) from Salmonella typhimurium (strain LT2 / SGSC1412 / ATCC 700720).